Consider the following 209-residue polypeptide: A-type ATP synthase subunit D (209 aa).

It belongs to the V-ATPase D subunit family. Has multiple subunits with at least A(3), B(3), C, D, E, F, H, I and proteolipid K(x).

The protein localises to the cell membrane. Functionally, component of the A-type ATP synthase that produces ATP from ADP in the presence of a proton gradient across the membrane. This Methanoregula boonei (strain DSM 21154 / JCM 14090 / 6A8) protein is A-type ATP synthase subunit D.